The sequence spans 184 residues: ATP synthase subunit delta (184 aa).

It belongs to the ATPase delta chain family. In terms of assembly, F-type ATPases have 2 components, F(1) - the catalytic core - and F(0) - the membrane proton channel. F(1) has five subunits: alpha(3), beta(3), gamma(1), delta(1), epsilon(1). F(0) has three main subunits: a(1), b(2) and c(10-14). The alpha and beta chains form an alternating ring which encloses part of the gamma chain. F(1) is attached to F(0) by a central stalk formed by the gamma and epsilon chains, while a peripheral stalk is formed by the delta and b chains.

It is found in the cell membrane. Its function is as follows. F(1)F(0) ATP synthase produces ATP from ADP in the presence of a proton or sodium gradient. F-type ATPases consist of two structural domains, F(1) containing the extramembraneous catalytic core and F(0) containing the membrane proton channel, linked together by a central stalk and a peripheral stalk. During catalysis, ATP synthesis in the catalytic domain of F(1) is coupled via a rotary mechanism of the central stalk subunits to proton translocation. In terms of biological role, this protein is part of the stalk that links CF(0) to CF(1). It either transmits conformational changes from CF(0) to CF(1) or is implicated in proton conduction. The polypeptide is ATP synthase subunit delta (Amoebophilus asiaticus (strain 5a2)).